The sequence spans 119 residues: uncharacterized protein (119 aa).

Transmembrane regions (helical) follow at residues 7 to 27 (ILHNALYYVLIIIYEYVLLLV) and 32 to 52 (YFFEFLFLFLPLWLVFFFLML).

It localises to the membrane. This is an uncharacterized protein from Saccharomyces cerevisiae (strain ATCC 204508 / S288c) (Baker's yeast).